We begin with the raw amino-acid sequence, 338 residues long: UDP-glucose 4-epimerase (338 aa).

Residues 11–12 (YI), 31–36 (DNLCNS), 58–59 (DI), 80–84 (FAGLK), Asn99, Ser124, Tyr149, Lys153, and Phe178 each bind NAD(+). The substrate site is built by Ser124 and Tyr149. Tyr149 acts as the Proton acceptor in catalysis. Residues Asn179, 199–200 (NL), 216–218 (AIF), Arg231, 292–295 (REGD), and Tyr299 each bind substrate.

It belongs to the NAD(P)-dependent epimerase/dehydratase family. As to quaternary structure, homodimer. The cofactor is NAD(+).

It catalyses the reaction UDP-alpha-D-glucose = UDP-alpha-D-galactose. It participates in carbohydrate metabolism; galactose metabolism. Its activity is regulated as follows. Inhibited by UDP-phenol and NaBH3CN. Functionally, involved in the metabolism of galactose. Catalyzes the conversion of UDP-galactose (UDP-Gal) to UDP-glucose (UDP-Glc) through a mechanism involving the transient reduction of NAD. It is only active on UDP-galactose and UDP-glucose. In Escherichia coli (strain K12), this protein is UDP-glucose 4-epimerase (galE).